The primary structure comprises 392 residues: S-adenosylmethionine synthase (392 aa).

Histidine 17 provides a ligand contact to ATP. Aspartate 19 lines the Mg(2+) pocket. Glutamate 45 provides a ligand contact to K(+). L-methionine is bound by residues glutamate 58 and glutamine 102. The flexible loop stretch occupies residues 102–112 (QSADIAQGVDA). ATP contacts are provided by residues 169-171 (DAK), 235-236 (KF), aspartate 244, 250-251 (RK), alanine 267, and lysine 271. Aspartate 244 serves as a coordination point for L-methionine. An L-methionine-binding site is contributed by lysine 275.

This sequence belongs to the AdoMet synthase family. In terms of assembly, homotetramer; dimer of dimers. Mg(2+) is required as a cofactor. The cofactor is K(+).

The protein resides in the cytoplasm. The catalysed reaction is L-methionine + ATP + H2O = S-adenosyl-L-methionine + phosphate + diphosphate. Its pathway is amino-acid biosynthesis; S-adenosyl-L-methionine biosynthesis; S-adenosyl-L-methionine from L-methionine: step 1/1. In terms of biological role, catalyzes the formation of S-adenosylmethionine (AdoMet) from methionine and ATP. The overall synthetic reaction is composed of two sequential steps, AdoMet formation and the subsequent tripolyphosphate hydrolysis which occurs prior to release of AdoMet from the enzyme. In Methylobacterium radiotolerans (strain ATCC 27329 / DSM 1819 / JCM 2831 / NBRC 15690 / NCIMB 10815 / 0-1), this protein is S-adenosylmethionine synthase.